The sequence spans 563 residues: Septation ring formation regulator EzrA (563 aa).

Residues 1 to 2 (ME) are Extracellular-facing. Residues 3 to 21 (LVIGLLVILLALFAAGYFF) form a helical membrane-spanning segment. The Cytoplasmic portion of the chain corresponds to 22 to 563 (RKKIYTEIDR…KKIKADQSAS (542 aa)). Coiled coils occupy residues 133–159 (EEKS…AYSH), 243–276 (KGYK…ELDV), and 309–529 (SKMP…ERLF).

This sequence belongs to the EzrA family.

The protein resides in the cell membrane. Negative regulator of FtsZ ring formation; modulates the frequency and position of FtsZ ring formation. Inhibits FtsZ ring formation at polar sites. Interacts either with FtsZ or with one of its binding partners to promote depolymerization. This chain is Septation ring formation regulator EzrA, found in Bacillus velezensis (strain DSM 23117 / BGSC 10A6 / LMG 26770 / FZB42) (Bacillus amyloliquefaciens subsp. plantarum).